Here is a 227-residue protein sequence, read N- to C-terminus: DNA repair protein RecO (227 aa).

This sequence belongs to the RecO family.

Its function is as follows. Involved in DNA repair and RecF pathway recombination. The chain is DNA repair protein RecO from Pseudomonas syringae pv. syringae (strain B728a).